The chain runs to 467 residues: Glutamyl-tRNA(Gln) amidotransferase subunit A (467 aa).

Residues K57 and S132 each act as charge relay system in the active site. The active-site Acyl-ester intermediate is the S156.

It belongs to the amidase family. GatA subfamily. As to quaternary structure, heterotrimer of A, B and C subunits.

It carries out the reaction L-glutamyl-tRNA(Gln) + L-glutamine + ATP + H2O = L-glutaminyl-tRNA(Gln) + L-glutamate + ADP + phosphate + H(+). Allows the formation of correctly charged Gln-tRNA(Gln) through the transamidation of misacylated Glu-tRNA(Gln) in organisms which lack glutaminyl-tRNA synthetase. The reaction takes place in the presence of glutamine and ATP through an activated gamma-phospho-Glu-tRNA(Gln). The chain is Glutamyl-tRNA(Gln) amidotransferase subunit A from Pseudothermotoga lettingae (strain ATCC BAA-301 / DSM 14385 / NBRC 107922 / TMO) (Thermotoga lettingae).